The primary structure comprises 991 residues: Transcription factor ROB1 (991 aa).

The segment at residues 17-43 is a DNA-binding region (zn(2)-C6 fungal-type); that stretch reads CTVCRTIKRKCDGNTPCSNCLKRNQEC. Disordered stretches follow at residues 150 to 188, 792 to 875, and 901 to 959; these read LNQQQQQQQPSPQSLSQSSASEVSTRSSPASPNSTISLA, FYAQ…EDNP, and QEEG…PQLP. A compositionally biased stretch (low complexity) spans 152–168; the sequence is QQQQQQQPSPQSLSQSS. The segment covering 169 to 187 has biased composition (polar residues); it reads ASEVSTRSSPASPNSTISL. A compositionally biased stretch (low complexity) spans 795 to 806; the sequence is QQQQQQQQQQQQ. 2 stretches are compositionally biased toward basic and acidic residues: residues 807–817 and 825–855; these read PKHEYHDHQQE and QEEHSEKDIKIEIKDEPQPQEEHIHQDYPMK. Residues 907-931 are compositionally biased toward low complexity; it reads QQQQQQQQEQVQQEQVQQEQVQQDQ.

The protein localises to the nucleus. Its function is as follows. Transcription factor that mediates conventional biofilm formation and plays a key role in microcolony formation under both flow and static conditions and to epithelial surfaces. Modulates infection of mammalian hosts. The protein is Transcription factor ROB1 of Candida albicans (strain SC5314 / ATCC MYA-2876) (Yeast).